A 143-amino-acid polypeptide reads, in one-letter code: Acetyltransferase plu1384 (143 aa).

An N-acetyltransferase domain is found at 1–138 (MEIRVFRQDD…ESVIFSKRLI (138 aa)).

The protein belongs to the acetyltransferase family. YpeA subfamily.

The protein is Acetyltransferase plu1384 of Photorhabdus laumondii subsp. laumondii (strain DSM 15139 / CIP 105565 / TT01) (Photorhabdus luminescens subsp. laumondii).